We begin with the raw amino-acid sequence, 324 residues long: Homeobox protein engrailed-2 (324 aa).

Disordered stretches follow at residues 1–59 (MEEK…HQHP), 89–174 (GGAR…VLKA), and 215–240 (DRPS…RPRT). Residues 89 to 110 (GGARGGEGGAGTTEGGGGGAGG) show a composition bias toward gly residues. The segment at residues 235–294 (DKRPRTAFTAEQLQRLKAEFQTNRYLTEQRRQSLAQELSLNESQIKIWFQNKRAKIKKAT) is a DNA-binding region (homeobox).

It belongs to the engrailed homeobox family. In terms of tissue distribution, cerebellar granule cells.

The protein localises to the nucleus. This Mus musculus (Mouse) protein is Homeobox protein engrailed-2 (En2).